The following is a 269-amino-acid chain: Hydroxyethylthiazole kinase (269 aa).

Met42 serves as a coordination point for substrate. Residues Arg118 and Ser164 each coordinate ATP. A substrate-binding site is contributed by Gly191.

This sequence belongs to the Thz kinase family. Mg(2+) is required as a cofactor.

The catalysed reaction is 5-(2-hydroxyethyl)-4-methylthiazole + ATP = 4-methyl-5-(2-phosphooxyethyl)-thiazole + ADP + H(+). It functions in the pathway cofactor biosynthesis; thiamine diphosphate biosynthesis; 4-methyl-5-(2-phosphoethyl)-thiazole from 5-(2-hydroxyethyl)-4-methylthiazole: step 1/1. Its function is as follows. Catalyzes the phosphorylation of the hydroxyl group of 4-methyl-5-beta-hydroxyethylthiazole (THZ). This is Hydroxyethylthiazole kinase from Listeria monocytogenes serovar 1/2a (strain ATCC BAA-679 / EGD-e).